A 216-amino-acid polypeptide reads, in one-letter code: Proenkephalin-A-B (216 aa).

5 consecutive propeptides follow at residues 64-85 (MDEL…LAKN), 93-131 (EYDS…GEMN), 144-155 (STDLEDETRGIQ), 165-175 (VGRPEWWQDYQ), and 183-207 (TRFT…PDME). Residues 114–133 (PESAIYHDNNSETPGEMNKR) are disordered.

The protein belongs to the opioid neuropeptide precursor family. The N-terminal domain contains 6 conserved cysteines thought to be involved in disulfide bonding and/or processing.

The protein resides in the secreted. Functionally, enkephalin neuropeptides compete with and mimic the effects of opiate drugs. They play a role in a number of physiologic functions, including pain perception and responses to stress. In Xenopus laevis (African clawed frog), this protein is Proenkephalin-A-B (penk-b).